The primary structure comprises 93 residues: Small ribosomal subunit protein bS20c (93 aa).

The protein belongs to the bacterial ribosomal protein bS20 family.

The protein localises to the plastid. Its subcellular location is the chloroplast. Binds directly to 16S ribosomal RNA. This chain is Small ribosomal subunit protein bS20c, found in Phaeodactylum tricornutum (strain CCAP 1055/1).